The sequence spans 707 residues: D-(-)-3-hydroxybutyrate oligomer hydrolase (707 aa).

The first 32 residues, 1–32 (MASVFKVRSASGHVPVVRTLAAMMAVTVVLTA), serve as a signal peptide directing secretion. Residue S321 is the Charge relay system of the active site.

This sequence belongs to the D-(-)-3-hydroxybutyrate oligomer hydrolase family.

It localises to the secreted. It catalyses the reaction (3R)-hydroxybutanoate dimer + H2O = 2 (R)-3-hydroxybutanoate + H(+). Its pathway is lipid metabolism; butanoate metabolism. Its function is as follows. Participates in the degradation of poly-3-hydroxybutyrate (PHB). It works downstream of poly(3-hydroxybutyrate) depolymerase, hydrolyzing D(-)-3-hydroxybutyrate oligomers of various length (3HB-oligomers) into 3HB-monomers. This is D-(-)-3-hydroxybutyrate oligomer hydrolase from Paraburkholderia xenovorans (strain LB400).